The following is a 517-amino-acid chain: Pentatricopeptide repeat-containing protein At5g42450, mitochondrial (517 aa).

The transit peptide at 1–23 (MLHMILSQRVILLRKYHSSANAL) directs the protein to the mitochondrion. 9 PPR repeats span residues 57–91 (DVIS…GIRP), 92–126 (NEFT…GLAS), 127–157 (NVFV…TRDP), 158–188 (NVVS…MPER), 189–223 (SVVT…GVVI), 225–259 (NEST…LGKR), 261–291 (NVFV…LEEE), 294–329 (NIVS…NLRP), and 368–398 (ELEH…MPLD). Residues 403–478 (FWKALLGGCQ…FTGCSWIEVR (76 aa)) form a type E motif region. The segment at 479-509 (DQIRVFVNADKNNELKDEVYRMLALVSQHLE) is type E(+) motif.

The protein belongs to the PPR family. PCMP-E subfamily.

Its subcellular location is the mitochondrion. The protein is Pentatricopeptide repeat-containing protein At5g42450, mitochondrial (PCMP-E102) of Arabidopsis thaliana (Mouse-ear cress).